We begin with the raw amino-acid sequence, 388 residues long: Succinate--CoA ligase [ADP-forming] subunit beta (388 aa).

In terms of domain architecture, ATP-grasp spans 9–244 (KQLFAEYGLP…PSQEDEREAH (236 aa)). Residues Lys-46, 53–55 (GRG), Glu-99, Thr-102, and Glu-107 contribute to the ATP site. Residues Asn-199 and Asp-213 each coordinate Mg(2+). Substrate is bound by residues Asn-264 and 321-323 (GIV).

Belongs to the succinate/malate CoA ligase beta subunit family. In terms of assembly, heterotetramer of two alpha and two beta subunits. Mg(2+) is required as a cofactor.

It catalyses the reaction succinate + ATP + CoA = succinyl-CoA + ADP + phosphate. It carries out the reaction GTP + succinate + CoA = succinyl-CoA + GDP + phosphate. The protein operates within carbohydrate metabolism; tricarboxylic acid cycle; succinate from succinyl-CoA (ligase route): step 1/1. Functionally, succinyl-CoA synthetase functions in the citric acid cycle (TCA), coupling the hydrolysis of succinyl-CoA to the synthesis of either ATP or GTP and thus represents the only step of substrate-level phosphorylation in the TCA. The beta subunit provides nucleotide specificity of the enzyme and binds the substrate succinate, while the binding sites for coenzyme A and phosphate are found in the alpha subunit. The chain is Succinate--CoA ligase [ADP-forming] subunit beta from Saccharophagus degradans (strain 2-40 / ATCC 43961 / DSM 17024).